A 633-amino-acid chain; its full sequence is Leucine-rich repeat and IQ domain-containing protein 3 (633 aa).

3 LRR repeats span residues 51 to 72 (SLRV…QGCK), 73 to 94 (KLIK…TFWN), and 98 to 119 (NLKL…CVLS). An LRRCT domain is found at 132 to 179 (CPVSLKKGYRHVLVNSIWPLKALDHHVISDEEIIQNWHLPERFKTFSQ). Positions 215-244 (HNSPVLIIQRWIRGFIVRKHLSPYFTRKRH) constitute an IQ domain. The tract at residues 322–343 (NSKQPRHHIQKGQNEMKSDSED) is disordered. Residues 556-616 (EKREKRKYKQ…AKVEFINTYY (61 aa)) adopt a coiled-coil conformation.

This Rattus norvegicus (Rat) protein is Leucine-rich repeat and IQ domain-containing protein 3 (Lrriq3).